A 329-amino-acid polypeptide reads, in one-letter code: Phenylalanine--tRNA ligase alpha subunit (329 aa).

A Mg(2+)-binding site is contributed by Glu246.

Belongs to the class-II aminoacyl-tRNA synthetase family. Phe-tRNA synthetase alpha subunit type 1 subfamily. As to quaternary structure, tetramer of two alpha and two beta subunits. It depends on Mg(2+) as a cofactor.

It is found in the cytoplasm. The enzyme catalyses tRNA(Phe) + L-phenylalanine + ATP = L-phenylalanyl-tRNA(Phe) + AMP + diphosphate + H(+). The sequence is that of Phenylalanine--tRNA ligase alpha subunit from Helicobacter hepaticus (strain ATCC 51449 / 3B1).